The chain runs to 425 residues: Enolase (425 aa).

Residue Gln-165 coordinates (2R)-2-phosphoglycerate. Glu-207 serves as the catalytic Proton donor. Mg(2+) is bound by residues Asp-244, Glu-285, and Asp-312. The (2R)-2-phosphoglycerate site is built by Lys-337, Arg-366, Ser-367, and Lys-388. Residue Lys-337 is the Proton acceptor of the active site.

It belongs to the enolase family. Mg(2+) serves as cofactor.

Its subcellular location is the cytoplasm. The protein resides in the secreted. It localises to the cell surface. The catalysed reaction is (2R)-2-phosphoglycerate = phosphoenolpyruvate + H2O. The protein operates within carbohydrate degradation; glycolysis; pyruvate from D-glyceraldehyde 3-phosphate: step 4/5. In terms of biological role, catalyzes the reversible conversion of 2-phosphoglycerate (2-PG) into phosphoenolpyruvate (PEP). It is essential for the degradation of carbohydrates via glycolysis. This chain is Enolase, found in Wolbachia sp. subsp. Brugia malayi (strain TRS).